A 264-amino-acid polypeptide reads, in one-letter code: MKPYLELIQKILDTGVERDDRTGTGTWSIFGHQMRFDLRQGFPLITTKKLHIRAIFIELLWFLRGETNVKYLHDHGVTIWDEWADEQGELGPIYGYQWRSWPLPDGGYLDQMAKTLTQIRNHPHSRRHVVVAYNPACVDEMALPPCHALFQFYVAQGRLSCQLYQRSADVFLGVPFNIASYALLTHLIAQQCDLDVGEFVWTGGDVHLYRNHLEPARLQLTREPLSLPHLRIKRRPPSLFEYQYDDLEIVDYQSYPAIKAAISV.

Arg-21 is a dUMP binding site. Residue His-51 coordinates (6R)-5,10-methylene-5,6,7,8-tetrahydrofolate. 126–127 is a binding site for dUMP; it reads RR. The active-site Nucleophile is the Cys-146. DUMP-binding positions include 166–169, Asn-177, and 207–209; these read RSAD and HLY. Asp-169 serves as a coordination point for (6R)-5,10-methylene-5,6,7,8-tetrahydrofolate. (6R)-5,10-methylene-5,6,7,8-tetrahydrofolate is bound at residue Ser-263.

This sequence belongs to the thymidylate synthase family. Bacterial-type ThyA subfamily. Homodimer.

It localises to the cytoplasm. It carries out the reaction dUMP + (6R)-5,10-methylene-5,6,7,8-tetrahydrofolate = 7,8-dihydrofolate + dTMP. It functions in the pathway pyrimidine metabolism; dTTP biosynthesis. Functionally, catalyzes the reductive methylation of 2'-deoxyuridine-5'-monophosphate (dUMP) to 2'-deoxythymidine-5'-monophosphate (dTMP) while utilizing 5,10-methylenetetrahydrofolate (mTHF) as the methyl donor and reductant in the reaction, yielding dihydrofolate (DHF) as a by-product. This enzymatic reaction provides an intracellular de novo source of dTMP, an essential precursor for DNA biosynthesis. The chain is Thymidylate synthase from Nitrosococcus oceani (strain ATCC 19707 / BCRC 17464 / JCM 30415 / NCIMB 11848 / C-107).